The following is a 227-amino-acid chain: tRNA (guanine-N(7)-)-methyltransferase (227 aa).

S-adenosyl-L-methionine is bound by residues Glu58, Glu83, Asp110, and Asp132. Asp132 is a catalytic residue. Residues Lys136, Asp168, and 205–208 (TRFE) each bind substrate.

This sequence belongs to the class I-like SAM-binding methyltransferase superfamily. TrmB family.

The enzyme catalyses guanosine(46) in tRNA + S-adenosyl-L-methionine = N(7)-methylguanosine(46) in tRNA + S-adenosyl-L-homocysteine. The protein operates within tRNA modification; N(7)-methylguanine-tRNA biosynthesis. In terms of biological role, catalyzes the formation of N(7)-methylguanine at position 46 (m7G46) in tRNA. This Acidithiobacillus ferrooxidans (strain ATCC 23270 / DSM 14882 / CIP 104768 / NCIMB 8455) (Ferrobacillus ferrooxidans (strain ATCC 23270)) protein is tRNA (guanine-N(7)-)-methyltransferase.